A 172-amino-acid polypeptide reads, in one-letter code: Diphosphoinositol polyphosphate phosphohydrolase 1 (172 aa).

Met1 carries the post-translational modification N-acetylmethionine. Residues Arg10, 18 to 20 (KKR), and 39 to 41 (SSR) contribute to the substrate site. The 128-residue stretch at 17 to 144 (YKKRAACLCF…VQASYFETLR (128 aa)) folds into the Nudix hydrolase domain. Mg(2+) is bound by residues Gly50 and Glu66. The short motif at 51-72 (GGMEPEEEPGTAAVREVCEEAG) is the Nudix box element. Catalysis depends on Glu69, which acts as the Proton acceptor. Glu70 is a Mg(2+) binding site. Residues 89–91 (RKH), Arg115, and Lys133 contribute to the substrate site.

Belongs to the Nudix hydrolase family. DIPP subfamily. Monomer. Mg(2+) serves as cofactor. It depends on Mn(2+) as a cofactor. Requires Zn(2+) as cofactor.

It is found in the cytoplasm. It localises to the nucleus. It catalyses the reaction diphospho-myo-inositol polyphosphate + H2O = myo-inositol polyphosphate + phosphate.. The enzyme catalyses 5-diphospho-1D-myo-inositol 1,2,3,4,6-pentakisphosphate + H2O = 1D-myo-inositol hexakisphosphate + phosphate + H(+). It carries out the reaction 3,5-bis(diphospho)-1D-myo-inositol 1,2,4,6-tetrakisphosphate + H2O = 3-diphospho-1D-myo-inositol 1,2,4,5,6-pentakisphosphate + phosphate + 2 H(+). The catalysed reaction is [phosphate](n+1) + n H2O = (n+1) phosphate + n H(+). It catalyses the reaction P(1),P(5)-bis(5'-adenosyl) pentaphosphate + H2O = ADP + ATP + 2 H(+). The enzyme catalyses P(1),P(6)-bis(5'-adenosyl) hexaphosphate + H2O = 2 ATP + 2 H(+). It carries out the reaction P(1),P(4)-bis(5'-adenosyl) tetraphosphate + H2O = AMP + ATP + 2 H(+). The catalysed reaction is a 5'-end (N(7)-methyl 5'-triphosphoguanosine)-ribonucleoside in mRNA + H2O = N(7)-methyl-GMP + a 5'-end diphospho-ribonucleoside in mRNA + 2 H(+). It catalyses the reaction a 5'-end (N(7)-methyl 5'-triphosphoguanosine)-ribonucleoside in mRNA + H2O = N(7)-methyl-GDP + a 5'-end phospho-ribonucleoside in mRNA + 2 H(+). Its function is as follows. Cleaves a beta-phosphate from the diphosphate groups in PP-InsP5 (diphosphoinositol pentakisphosphate) and [PP]2-InsP4 (bisdiphosphoinositol tetrakisphosphate), suggesting that it may play a role in signal transduction. InsP6 (inositol hexakisphosphate) is not a substrate. Also able to catalyze the hydrolysis of dinucleoside oligophosphates, with diadenosine 5',5'''-P1,P6-hexaphosphate (Ap6A) and diadenosine 5',5'''- P1,P5-pentaphosphate (Ap5A) being the preferred substrates. The major reaction products are ADP and p4a from Ap6A and ADP and ATP from Ap5A. Also able to hydrolyze 5- phosphoribose 1-diphosphate. Acts as a decapping enzyme that can hydrolyze both monomethylated and unmethylated capped RNAs. Hydrolyzes monomethylated capped RNA after both the alpha- and beta-phosphates generating m7GMP + ppRNA and m7GDP + pRNA. Modulates the stability of a subset of mRNAs implicated in cell motility. Divalent cations zinc, magnesium and manganese determine its substrate specificity. Exhibits diphosphoinositol polyphosphate phosphohydrolase in the presence of magnesium ions, diadenosine hexaphosphate hydrolase activity in the presence of manganese ions and endopolyphosphatase activity in the presence of zinc ions. Plays an important role in limiting DNA damage and maintaining cell survival upon oxidative stress via its endopolyphosphatase activity. The sequence is that of Diphosphoinositol polyphosphate phosphohydrolase 1 from Bos taurus (Bovine).